The chain runs to 365 residues: Chorismate synthase (365 aa).

A compositionally biased stretch (basic and acidic residues) spans 41–51 (IQKELDRRRPG). Residues 41–62 (IQKELDRRRPGQSEVSTPRSEA) form a disordered region. R48 serves as a coordination point for NADP(+). FMN-binding positions include 125 to 127 (RSS), G285, 300 to 304 (KPTPS), and R327.

Belongs to the chorismate synthase family. FMNH2 is required as a cofactor.

It catalyses the reaction 5-O-(1-carboxyvinyl)-3-phosphoshikimate = chorismate + phosphate. The protein operates within metabolic intermediate biosynthesis; chorismate biosynthesis; chorismate from D-erythrose 4-phosphate and phosphoenolpyruvate: step 7/7. In terms of biological role, catalyzes the anti-1,4-elimination of the C-3 phosphate and the C-6 proR hydrogen from 5-enolpyruvylshikimate-3-phosphate (EPSP) to yield chorismate, which is the branch point compound that serves as the starting substrate for the three terminal pathways of aromatic amino acid biosynthesis. This reaction introduces a second double bond into the aromatic ring system. In Methanosarcina mazei (strain ATCC BAA-159 / DSM 3647 / Goe1 / Go1 / JCM 11833 / OCM 88) (Methanosarcina frisia), this protein is Chorismate synthase.